We begin with the raw amino-acid sequence, 745 residues long: Meiotic driver SPOK3 (745 aa).

A coiled-coil region spans residues 4–34; that stretch reads KDRITQLLRELEEAKAREAQERCEKERLQLE. Disordered stretches follow at residues 173 to 222 and 407 to 487; these read ELTQ…DGVG and LSSA…VDPQ. Residues 188–197 are compositionally biased toward basic and acidic residues; the sequence is TSDRSLERRQ. Polar residues-rich tracts occupy residues 208–217 and 409–422; these read KSKYICSNRQ and SAPS…SEYT. Positions 214–325 are required for antidote activity; it reads SNRQPDGVGI…LLLYVDRDDW (112 aa). A compositionally biased stretch (basic and acidic residues) spans 466-482; it reads AKRERGPSSGGKDDGRS. The segment at 491 to 745 is required for poison activity; sequence QYCTQACLLG…SPMATPSHGG (255 aa).

The protein resides in the cytoplasm. Its subcellular location is the nucleus. Functionally, promotes unequal transmission of alleles from the parental zygote to progeny spores by acting as poison/antidote system, leading to poisoning of progeny that do not inherit the allele. May possess DNA nuclease activity that leads to spore killing, and a kinase activity that confers resistance to the nuclease activity. This Podospora anserina (Pleurage anserina) protein is Meiotic driver SPOK3.